Consider the following 323-residue polypeptide: tRNA U34 carboxymethyltransferase (323 aa).

Residues Lys91, Trp105, Lys110, Gly130, Ile180 to Glu181, Met196, Tyr200, and Arg315 each bind carboxy-S-adenosyl-L-methionine.

Belongs to the class I-like SAM-binding methyltransferase superfamily. CmoB family. As to quaternary structure, homotetramer.

It catalyses the reaction carboxy-S-adenosyl-L-methionine + 5-hydroxyuridine(34) in tRNA = 5-carboxymethoxyuridine(34) in tRNA + S-adenosyl-L-homocysteine + H(+). Its function is as follows. Catalyzes carboxymethyl transfer from carboxy-S-adenosyl-L-methionine (Cx-SAM) to 5-hydroxyuridine (ho5U) to form 5-carboxymethoxyuridine (cmo5U) at position 34 in tRNAs. The sequence is that of tRNA U34 carboxymethyltransferase from Citrifermentans bemidjiense (strain ATCC BAA-1014 / DSM 16622 / JCM 12645 / Bem) (Geobacter bemidjiensis).